The primary structure comprises 338 residues: Bifunctional methylenetetrahydrofolate dehydrogenase/cyclohydrolase 2, mitochondrial (338 aa).

Residues Tyr-89–Lys-93 and Val-136–Leu-138 each bind substrate. NAD(+)-binding positions include Gly-205–Ser-207 and Arg-238. Pro-314 to Gly-318 contributes to the substrate binding site.

Belongs to the tetrahydrofolate dehydrogenase/cyclohydrolase family. The cofactor is Mg(2+). As to expression, widely expressed.

Its subcellular location is the mitochondrion inner membrane. It catalyses the reaction (6R)-5,10-methylene-5,6,7,8-tetrahydrofolate + NADP(+) = (6R)-5,10-methenyltetrahydrofolate + NADPH. The catalysed reaction is (6R)-5,10-methylene-5,6,7,8-tetrahydrofolate + NAD(+) = (6R)-5,10-methenyltetrahydrofolate + NADH. The enzyme catalyses (6R)-5,10-methenyltetrahydrofolate + H2O = (6R)-10-formyltetrahydrofolate + H(+). Its pathway is one-carbon metabolism; tetrahydrofolate interconversion. In terms of biological role, bifunctional mitochondrial folate-interconverting enzyme that has both NAD/NADP-dependent methylenetetrahydrofolate dehydrogenase and methenyltetrahydrofolate cyclohydrolase activities. Has no NAD/NADP-dependent methylenetetrahydrofolate dehydrogenase activity. The sequence is that of Bifunctional methylenetetrahydrofolate dehydrogenase/cyclohydrolase 2, mitochondrial from Rattus norvegicus (Rat).